The sequence spans 862 residues: MSPESWKDQLSLVSADDYRIMGRNRIPNAVTKLSGLETDDPNGGAWVTKPKRIVVSNQLPLRAHRDISSNKWCFEFDNDSLYLQLKDGFPPETEVVYVGSLNADVLPSEQEDVSQFLLEKFQCVPTFLPSDLLNKYYHGFCKHYLWPIFHYLLPMTQAQGSLFDRSNWRAYTTVNKIFADKIFEVLNPDDDYVWIHDYHLMILPTFLRNRFHRIKLGIFLHSPFPSSEIYRTLPVRDEILKGFLNCDLVGFHTFDYARHFLSCCSRMLGLDYESKRGYIGLEYFGRTVSIKILPVGIHMGQIESIKASEKTAEKVKRLRERFKGNIVMLGVDDLDMFKGISLKFWAMGQLLEQNEELRGKVVLVQITNPARSSGKDVQDVEKQINLIADEINSKFGRPGGYKPIVFINGPVSTLDKVAYYAISECVVVNAVRDGMNLVPYKYTVTRQGSPALDAALGFGEDDVRKSVIIVSEFIGCSPSLSGAIRVNPWNIDAVTNAMSSAMTMSDKEKNLRHQKHHKYISSHNVAYWARSYDQDLQRACKDHYNKRFWGVGFGLFFKVVALDPNFRRLCGETIVPAYRRSSSRLILLDYDGTMMDQDTLDKRPSDDLISLLNRLCDDPSNLVFIVSGRGKDPLSKWFDSCPNLGISAEHGYFTRWNSNSPWETSELPADLSWKKIAKPVMNHYMEATDGSFIEEKESAMVWHHQEADHSFGSWQAKELLDHLESVLTNEPVVVKRGQHIVEVKPQGVSKGKVVEHLIATMRNTKGKRPDFLLCIGDDRSDEDMFDSIVKHQDVSSIGLEEVFACTVGQKPSKAKYYLDDTPSVIKMLEWLASASDGSKHEQQKKQSKFTFQQPMGQCRKKA.

Serine 5 bears the Phosphoserine mark. The tract at residues 50-538 (PKRIVVSNQL…ARSYDQDLQR (489 aa)) is glycosyltransferase. The interval 838 to 862 (SKHEQQKKQSKFTFQQPMGQCRKKA) is disordered.

It in the N-terminal section; belongs to the glycosyltransferase 20 family. This sequence in the C-terminal section; belongs to the trehalose phosphatase family. As to expression, expressed in leaves, roots, stems and flowers.

It carries out the reaction D-glucose 6-phosphate + UDP-alpha-D-glucose = alpha,alpha-trehalose 6-phosphate + UDP + H(+). This Arabidopsis thaliana (Mouse-ear cress) protein is Probable alpha,alpha-trehalose-phosphate synthase [UDP-forming] 11 (TPS11).